We begin with the raw amino-acid sequence, 1374 residues long: Probable ATP-dependent RNA helicase spindle-E (1374 aa).

The Helicase ATP-binding domain maps to 46–212; that stretch reads LARIRENPVI…FKTPKKVGYL (167 aa). ATP is bound at residue 59 to 66; that stretch reads GPTGCGKT. The DEAH box signature appears at 158–161; sequence DEIH. One can recognise a Helicase C-terminal domain in the interval 265-447; the sequence is VCDRLIENMH…NVILKAKLLE (183 aa). Positions 866–931 constitute a Tudor domain; the sequence is QFAVGQMVAA…RKLDGPLAYM (66 aa).

Belongs to the DEAD box helicase family. DEAH subfamily.

The protein resides in the cytoplasm. The enzyme catalyses ATP + H2O = ADP + phosphate + H(+). Functionally, probable ATP-binding RNA helicase which plays a central role during gametogenesis by repressing transposable elements and preventing their mobilization, which is essential for the germline integrity. Acts via the piRNA metabolic process, which mediates the repression of transposable elements during meiosis by forming complexes composed of piRNAs and Piwi proteins and govern the methylation and subsequent repression of transposons. The polypeptide is Probable ATP-dependent RNA helicase spindle-E (spn-E) (Aedes aegypti (Yellowfever mosquito)).